We begin with the raw amino-acid sequence, 1673 residues long: Calmodulin-binding transcription activator 1 (1673 aa).

A DNA-binding region (CG-1) is located at residues 63–188 (KCSSLPKERH…YLNVPAIEDC (126 aa)). The short motif at 112-119 (RKKVKYRK) is the Nuclear localization signal element. The disordered stretch occupies residues 283-375 (HRIISPKVEP…LNSDPDMVDS (93 aa)). Residues 302–313 (EVQHNDVSEGKH) are compositionally biased toward basic and acidic residues. The segment covering 337-367 (HQSSTEVSSTNQVEVPDTTQSSPVSISSGLN) has biased composition (polar residues). The IPT/TIG domain occupies 875–953 (DYSPEWSYPE…ISNSVVFEYK (79 aa)). The tract at residues 990 to 1021 (MAEMTGSQQHKQASGGGSSGGGSGSGNGGSQA) is disordered. A compositionally biased stretch (gly residues) spans 1003–1018 (SGGGSSGGGSGSGNGG). 3 ANK repeats span residues 1064-1093 (RGMT…KHAD), 1109-1129 (FSCT…AVVL), and 1143-1172 (LGRL…DEQA). Disordered stretches follow at residues 1215–1246 (ASTN…PKKH) and 1264–1317 (ALSL…GSQP). A compositionally biased stretch (polar residues) spans 1273 to 1289 (RKQSPSSKQSVPETLSP). IQ domains follow at residues 1547-1576 (QEVA…AAIL), 1577-1599 (IQSK…AAVL), and 1600-1622 (IQKY…TAVI).

This sequence belongs to the CAMTA family. As to quaternary structure, may interact with calmodulin. As to expression, normally expressed in non-neoplastic adult central nervous system tissues: detected in whole brain, cerebellum, brain cortex, occipital lobe, frontal lobe, temporal lobe, putamen. Expression levels are low in oligodendroglial tumors, and are reduced by half in oligodendroglioma and astrocytoma cases with 1p loss of heterozygosity. Detected in neuroblastic-type cultured neuroblastoma cells. Expressed in heart and kidney.

It localises to the nucleus. It is found in the cytoplasm. In terms of biological role, transcriptional activator. The chain is Calmodulin-binding transcription activator 1 from Homo sapiens (Human).